Consider the following 209-residue polypeptide: MARSKTSHNWLKEHFNDPFVKMAQKDGYRSRASYKLLEIQEKDRLIRPGMSVIDLGAAPGGWSQVTSRLIGGQGRLIASDILEMDSIPDVTFIQGDFTEDAVLAQILEAVGNSEVDLVISDMAPNMSGLAAVDMPRAMFLCELALDLAGRVLRPGGDFLIKIFQGEGFDEYHKSVRQMFEKVQMRKPSSSRDRSREQYLLGRGFRGRSE.

S-adenosyl-L-methionine is bound by residues glycine 60, tryptophan 62, aspartate 80, aspartate 96, and aspartate 121. Catalysis depends on lysine 161, which acts as the Proton acceptor. Basic and acidic residues predominate over residues valine 182 to glutamate 196. A disordered region spans residues valine 182–glutamate 209.

It belongs to the class I-like SAM-binding methyltransferase superfamily. RNA methyltransferase RlmE family.

The protein resides in the cytoplasm. It carries out the reaction uridine(2552) in 23S rRNA + S-adenosyl-L-methionine = 2'-O-methyluridine(2552) in 23S rRNA + S-adenosyl-L-homocysteine + H(+). Functionally, specifically methylates the uridine in position 2552 of 23S rRNA at the 2'-O position of the ribose in the fully assembled 50S ribosomal subunit. The protein is Ribosomal RNA large subunit methyltransferase E of Pseudomonas fluorescens (strain ATCC BAA-477 / NRRL B-23932 / Pf-5).